Here is a 122-residue protein sequence, read N- to C-terminus: Small ribosomal subunit protein uS13 (122 aa).

Residues 95–116 (GLPCRGQKTKTNARTRKGKKKT) are compositionally biased toward basic residues. A disordered region spans residues 95 to 122 (GLPCRGQKTKTNARTRKGKKKTVGAATK).

Belongs to the universal ribosomal protein uS13 family. In terms of assembly, part of the 30S ribosomal subunit. Forms a loose heterodimer with protein S19. Forms two bridges to the 50S subunit in the 70S ribosome.

Its function is as follows. Located at the top of the head of the 30S subunit, it contacts several helices of the 16S rRNA. In the 70S ribosome it contacts the 23S rRNA (bridge B1a) and protein L5 of the 50S subunit (bridge B1b), connecting the 2 subunits; these bridges are implicated in subunit movement. Contacts the tRNAs in the A and P-sites. This Aliarcobacter butzleri (strain RM4018) (Arcobacter butzleri) protein is Small ribosomal subunit protein uS13.